The following is a 412-amino-acid chain: cAMP-dependent protein kinase regulatory subunit (412 aa).

The dimerization and phosphorylation stretch occupies residues 1–142; sequence MSFEEVYEEL…RLKRSVAGNF (142 aa). Residues 101 to 105 carry the Pseudophosphorylation motif motif; that stretch reads RRQSV. At serine 104 the chain carries Phosphoserine. Residues 143–277, glutamate 224, arginine 233, 278–412, glutamate 344, and arginine 353 each bind 3',5'-cyclic AMP; these read LFKN…EEVP and ILSS…STKA. The interval 392 to 412 is disordered; it reads MGMDNEYGDQSLHRSPPSTKA.

It belongs to the cAMP-dependent kinase regulatory chain family. In terms of assembly, tetramer, composed of 2 regulatory (R) and 2 catalytic (C) subunits. In the presence of cAMP it dissociates into 2 active monomeric C subunits and an R dimer.

This Schizosaccharomyces pombe (strain 972 / ATCC 24843) (Fission yeast) protein is cAMP-dependent protein kinase regulatory subunit (cgs1).